We begin with the raw amino-acid sequence, 122 residues long: MKITRKAATQRRHRRIRRKVFGTPERPRLAVFRSHRHIYAQVIDDVAQHTLVSASTLDRELREAFKDIGTATREAAAVVGRSVAQRALQAGICQVVFDRGGKLYHGRVQALAEAAREAGLQF.

It belongs to the universal ribosomal protein uL18 family. In terms of assembly, part of the 50S ribosomal subunit; part of the 5S rRNA/L5/L18/L25 subcomplex. Contacts the 5S and 23S rRNAs.

This is one of the proteins that bind and probably mediate the attachment of the 5S RNA into the large ribosomal subunit, where it forms part of the central protuberance. This chain is Large ribosomal subunit protein uL18, found in Synechococcus sp. (strain JA-3-3Ab) (Cyanobacteria bacterium Yellowstone A-Prime).